A 293-amino-acid chain; its full sequence is Ribosomal protein L11 methyltransferase (293 aa).

Residues Thr145, Gly166, Asp188, and Asn230 each contribute to the S-adenosyl-L-methionine site.

It belongs to the methyltransferase superfamily. PrmA family.

The protein localises to the cytoplasm. The enzyme catalyses L-lysyl-[protein] + 3 S-adenosyl-L-methionine = N(6),N(6),N(6)-trimethyl-L-lysyl-[protein] + 3 S-adenosyl-L-homocysteine + 3 H(+). Its function is as follows. Methylates ribosomal protein L11. This Salmonella newport (strain SL254) protein is Ribosomal protein L11 methyltransferase.